The chain runs to 137 residues: Large ribosomal subunit protein eL28 (137 aa).

Serine 2 is modified (N-acetylserine). Residues lysine 58 and lysine 65 each participate in a glycyl lysine isopeptide (Lys-Gly) (interchain with G-Cter in SUMO2) cross-link. Serine 115 is modified (phosphoserine).

This sequence belongs to the eukaryotic ribosomal protein eL28 family. As to quaternary structure, component of the large ribosomal subunit.

Its subcellular location is the cytoplasm. Functionally, component of the large ribosomal subunit. The ribosome is a large ribonucleoprotein complex responsible for the synthesis of proteins in the cell. The protein is Large ribosomal subunit protein eL28 (RPL28) of Bos taurus (Bovine).